The following is a 236-amino-acid chain: 2-C-methyl-D-erythritol 4-phosphate cytidylyltransferase (236 aa).

It belongs to the IspD/TarI cytidylyltransferase family. IspD subfamily. Homodimer.

It catalyses the reaction 2-C-methyl-D-erythritol 4-phosphate + CTP + H(+) = 4-CDP-2-C-methyl-D-erythritol + diphosphate. The protein operates within isoprenoid biosynthesis; isopentenyl diphosphate biosynthesis via DXP pathway; isopentenyl diphosphate from 1-deoxy-D-xylulose 5-phosphate: step 2/6. Catalyzes the formation of 4-diphosphocytidyl-2-C-methyl-D-erythritol from CTP and 2-C-methyl-D-erythritol 4-phosphate (MEP). This is 2-C-methyl-D-erythritol 4-phosphate cytidylyltransferase from Shigella flexneri serotype 5b (strain 8401).